Reading from the N-terminus, the 69-residue chain is Large ribosomal subunit protein uL29 (69 aa).

Belongs to the universal ribosomal protein uL29 family.

This is Large ribosomal subunit protein uL29 from Rhodopseudomonas palustris (strain BisB5).